Reading from the N-terminus, the 305-residue chain is Protoheme IX farnesyltransferase 2 (305 aa).

A run of 8 helical transmembrane segments spans residues 31–51 (VVML…ETWI), 53–73 (WKIL…AAVI), 103–123 (ALVF…LWVN), 125–145 (LTAL…TMYL), 152–172 (NIVI…TAVT), 179–199 (ALLL…ALAI), 231–251 (VLLA…AIYL), and 277–297 (AMKT…VLLV).

It belongs to the UbiA prenyltransferase family. Protoheme IX farnesyltransferase subfamily.

It is found in the cell inner membrane. The enzyme catalyses heme b + (2E,6E)-farnesyl diphosphate + H2O = Fe(II)-heme o + diphosphate. The protein operates within porphyrin-containing compound metabolism; heme O biosynthesis; heme O from protoheme: step 1/1. Its function is as follows. Converts heme B (protoheme IX) to heme O by substitution of the vinyl group on carbon 2 of heme B porphyrin ring with a hydroxyethyl farnesyl side group. The chain is Protoheme IX farnesyltransferase 2 from Pseudoalteromonas atlantica (strain T6c / ATCC BAA-1087).